Reading from the N-terminus, the 340-residue chain is MAVTMYYEEDVEVAALAGKKIAVIGYGSQGHAHAQNLRDSGHDVIIGVRQGKSFDKAKEDGFETFEVGEAVAKADVIMVLAPDELQQSIYEEDIKPNLKAGSALGFAHGFNIHFGYIEVPEDVDVFMVAPKAPGHLVRRTFTEGFGTPALFVSHQNATGHAREIAMDWAKGIGCARVGIIETTFKEETEEDLFGEQAVLCGGLTALVEAGFETLTEAGYAGELAYFEVLHEMKLIVDLMYEGGFTKMRQSISNTAEFGDYVTGPRIITDEVKKNMKLVLADIQSGKFAQDFVDDFKAGRPKLTAYREAAKNLEIEKIGAELRKAMPFTQSGDDDAFKIYQ.

Positions 3–182 (VTMYYEEDVE…GCARVGIIET (180 aa)) constitute a KARI N-terminal Rossmann domain. Residues 26–29 (YGSQ), R49, S53, and 83–86 (DELQ) each bind NADP(+). The active site involves H108. An NADP(+)-binding site is contributed by G134. The KARI C-terminal knotted domain maps to 183–328 (TFKEETEEDL…AELRKAMPFT (146 aa)). 4 residues coordinate Mg(2+): D191, E195, E227, and E231. A substrate-binding site is contributed by S252.

It belongs to the ketol-acid reductoisomerase family. It depends on Mg(2+) as a cofactor.

The enzyme catalyses (2R)-2,3-dihydroxy-3-methylbutanoate + NADP(+) = (2S)-2-acetolactate + NADPH + H(+). It catalyses the reaction (2R,3R)-2,3-dihydroxy-3-methylpentanoate + NADP(+) = (S)-2-ethyl-2-hydroxy-3-oxobutanoate + NADPH + H(+). The protein operates within amino-acid biosynthesis; L-isoleucine biosynthesis; L-isoleucine from 2-oxobutanoate: step 2/4. Its pathway is amino-acid biosynthesis; L-valine biosynthesis; L-valine from pyruvate: step 2/4. Its function is as follows. Involved in the biosynthesis of branched-chain amino acids (BCAA). Catalyzes an alkyl-migration followed by a ketol-acid reduction of (S)-2-acetolactate (S2AL) to yield (R)-2,3-dihydroxy-isovalerate. In the isomerase reaction, S2AL is rearranged via a Mg-dependent methyl migration to produce 3-hydroxy-3-methyl-2-ketobutyrate (HMKB). In the reductase reaction, this 2-ketoacid undergoes a metal-dependent reduction by NADPH to yield (R)-2,3-dihydroxy-isovalerate. The chain is Ketol-acid reductoisomerase (NADP(+)) from Lactococcus lactis subsp. cremoris (strain MG1363).